Here is an 801-residue protein sequence, read N- to C-terminus: H(+)/Cl(-) exchange transporter 3 (801 aa).

The Cytoplasmic segment spans residues M1–A125. Short sequence motifs (di-leucine internalization motif; mediates targeting to late endosome and lysosome membranes) lie at residues L28 to L29, L46 to L47, and L71 to L75. The helical transmembrane segment at W126–S163 threads the bilayer. An N-linked (GlcNAc...) asparagine glycan is attached at N177. The helical transmembrane segment at M209 to F232 threads the bilayer. Residues G238 to P242 carry the Selectivity filter part_1 motif. S239 contributes to the chloride binding site. Residues I241–L248 constitute an intramembrane region (helical). The next 2 helical transmembrane spans lie at G258 to G276 and E282 to P301. The Selectivity filter part_2 motif lies at G280–P284. 2 consecutive intramembrane regions (helical) follow at residues V313 to A325 and P329 to L337. 3 helical membrane-spanning segments follow: residues L349 to N367, F391 to R416, and F423 to F443. N451 and N479 each carry an N-linked (GlcNAc...) asparagine glycan. A helical transmembrane segment spans residues I500 to I520. Positions G525–P529 match the Selectivity filter part_3 motif. Residue F527 coordinates chloride. Intramembrane regions (helical) lie at residues G555–V569 and T573–T584. An intramembrane region (note=Loop between two helices) is located at residues G585 to E588. Residues Y589–F607 form a helical membrane-spanning segment. Residues G608 to N801 are Cytoplasmic-facing. Y613 lines the chloride pocket. 2 consecutive CBS domains span residues M641–K705 and L738–P795. ATP-binding positions include Y672–G674 and T779–D782.

It belongs to the chloride channel (TC 2.A.49) family. ClC-3/CLCN3 subfamily. As to quaternary structure, monomer and homodimer. Forms heterodimers with CLCN4. Post-translationally, N-glycosylated.

The protein localises to the early endosome membrane. The protein resides in the late endosome membrane. Its subcellular location is the lysosome membrane. It is found in the cell membrane. In terms of biological role, strongly outwardly rectifying, electrogenic H(+)/Cl(-)exchanger which mediates the exchange of chloride ions against protons. The CLC channel family contains both chloride channels and proton-coupled anion transporters that exchange chloride or another anion for protons. The presence of conserved gating glutamate residues is typical for family members that function as antiporters. This chain is H(+)/Cl(-) exchange transporter 3 (CLCN3), found in Pongo abelii (Sumatran orangutan).